The chain runs to 650 residues: Aminopeptidase B (650 aa).

Phosphoserine is present on Ser7. 298 to 302 serves as a coordination point for substrate; it reads GGMEN. His325 provides a ligand contact to Zn(2+). Residue Glu326 is the Proton acceptor of the active site. Zn(2+)-binding residues include His329 and Glu348. Residue Lys446 is modified to N6-acetyllysine.

Belongs to the peptidase M1 family. Monomer. It depends on Zn(2+) as a cofactor. In terms of tissue distribution, widely expressed.

It is found in the secreted. The enzyme catalyses Release of N-terminal Arg and Lys from oligopeptides when P1' is not Pro. Also acts on arylamides of Arg and Lys.. Functionally, exopeptidase which selectively removes arginine and/or lysine residues from the N-terminus of several peptide substrates including Arg(0)-Leu-enkephalin, Arg(0)-Met-enkephalin and Arg(-1)-Lys(0)-somatostatin-14. Can hydrolyze leukotriene A4 (LTA-4) into leukotriene B4 (LTB-4). In Rattus norvegicus (Rat), this protein is Aminopeptidase B (Rnpep).